Consider the following 603-residue polypeptide: Elongation factor 4 (603 aa).

The tr-type G domain occupies 7–189 (SRIRNFCIIA…SIVHLVPPPS (183 aa)). Residues 19-24 (DHGKST) and 136-139 (NKID) each bind GTP.

This sequence belongs to the TRAFAC class translation factor GTPase superfamily. Classic translation factor GTPase family. LepA subfamily.

Its subcellular location is the cell inner membrane. It carries out the reaction GTP + H2O = GDP + phosphate + H(+). Required for accurate and efficient protein synthesis under certain stress conditions. May act as a fidelity factor of the translation reaction, by catalyzing a one-codon backward translocation of tRNAs on improperly translocated ribosomes. Back-translocation proceeds from a post-translocation (POST) complex to a pre-translocation (PRE) complex, thus giving elongation factor G a second chance to translocate the tRNAs correctly. Binds to ribosomes in a GTP-dependent manner. The chain is Elongation factor 4 from Crocosphaera subtropica (strain ATCC 51142 / BH68) (Cyanothece sp. (strain ATCC 51142)).